The chain runs to 203 residues: Endo-type membrane-bound lytic murein transglycosylase A (203 aa).

A signal peptide spans 1–15 (MKLRWFAFLIVLLAG). The N-palmitoyl cysteine moiety is linked to residue cysteine 16. The S-diacylglycerol cysteine moiety is linked to residue cysteine 16.

This sequence belongs to the transglycosylase Slt family.

It localises to the cell outer membrane. The enzyme catalyses Endolytic cleavage of the (1-&gt;4)-beta-glycosidic linkage between N-acetylmuramic acid (MurNAc) and N-acetylglucosamine (GlcNAc) residues in peptidoglycan with concomitant formation of a 1,6-anhydrobond in the MurNAc residue.. Its function is as follows. Murein-degrading enzyme. May play a role in recycling of muropeptides during cell elongation and/or cell division. Preferentially cleaves at a distance of more than two disaccharide units from the ends of the glycan chain. This is Endo-type membrane-bound lytic murein transglycosylase A from Escherichia coli (strain K12 / MC4100 / BW2952).